A 529-amino-acid chain; its full sequence is Peptide chain release factor 3 (529 aa).

Residues 11-280 form the tr-type G domain; it reads AKRRTFAIIS…GLVEWAPAPM (270 aa). GTP is bound by residues 20–27, 88–92, and 142–145; these read SHPDAGKT, DTPGH, and NKLD.

The protein belongs to the TRAFAC class translation factor GTPase superfamily. Classic translation factor GTPase family. PrfC subfamily.

The protein localises to the cytoplasm. Increases the formation of ribosomal termination complexes and stimulates activities of RF-1 and RF-2. It binds guanine nucleotides and has strong preference for UGA stop codons. It may interact directly with the ribosome. The stimulation of RF-1 and RF-2 is significantly reduced by GTP and GDP, but not by GMP. This is Peptide chain release factor 3 from Shigella sonnei (strain Ss046).